Here is a 449-residue protein sequence, read N- to C-terminus: Tubulin beta-2 chain (449 aa).

Positions 11 and 69 each coordinate GTP. Glutamate 69 serves as a coordination point for Mg(2+). Histidine 137 carries the methylhistidine modification. Residues serine 138, glycine 142, threonine 143, glycine 144, asparagine 204, and asparagine 226 each contribute to the GTP site.

The protein belongs to the tubulin family. As to quaternary structure, dimer of alpha and beta chains. A typical microtubule is a hollow water-filled tube with an outer diameter of 25 nm and an inner diameter of 15 nM. Alpha-beta heterodimers associate head-to-tail to form protofilaments running lengthwise along the microtubule wall with the beta-tubulin subunit facing the microtubule plus end conferring a structural polarity. Microtubules usually have 13 protofilaments but different protofilament numbers can be found in some organisms and specialized cells. It depends on Mg(2+) as a cofactor.

It localises to the cytoplasm. It is found in the cytoskeleton. In terms of biological role, tubulin is the major constituent of microtubules, a cylinder consisting of laterally associated linear protofilaments composed of alpha- and beta-tubulin heterodimers. Microtubules grow by the addition of GTP-tubulin dimers to the microtubule end, where a stabilizing cap forms. Below the cap, tubulin dimers are in GDP-bound state, owing to GTPase activity of alpha-tubulin. In Emericella nidulans (strain FGSC A4 / ATCC 38163 / CBS 112.46 / NRRL 194 / M139) (Aspergillus nidulans), this protein is Tubulin beta-2 chain (tubC).